Consider the following 161-residue polypeptide: Putative 4-hydroxy-4-methyl-2-oxoglutarate aldolase (161 aa).

Residues 78-81 (GDVI) and Arg100 contribute to the substrate site. Asp101 serves as a coordination point for a divalent metal cation.

It belongs to the class II aldolase/RraA-like family. In terms of assembly, homotrimer. It depends on a divalent metal cation as a cofactor.

The enzyme catalyses 4-hydroxy-4-methyl-2-oxoglutarate = 2 pyruvate. It catalyses the reaction oxaloacetate + H(+) = pyruvate + CO2. Its function is as follows. Catalyzes the aldol cleavage of 4-hydroxy-4-methyl-2-oxoglutarate (HMG) into 2 molecules of pyruvate. Also contains a secondary oxaloacetate (OAA) decarboxylase activity due to the common pyruvate enolate transition state formed following C-C bond cleavage in the retro-aldol and decarboxylation reactions. The chain is Putative 4-hydroxy-4-methyl-2-oxoglutarate aldolase from Mycobacterium avium (strain 104).